Here is a 76-residue protein sequence, read N- to C-terminus: DNA-directed RNA polymerase subunit epsilon (76 aa).

Belongs to the RNA polymerase subunit epsilon family. In terms of assembly, RNAP is composed of a core of 2 alpha, a beta and a beta' subunit. The core is associated with a delta subunit, and at least one of epsilon or omega. When a sigma factor is associated with the core the holoenzyme is formed, which can initiate transcription.

It catalyses the reaction RNA(n) + a ribonucleoside 5'-triphosphate = RNA(n+1) + diphosphate. Functionally, a non-essential component of RNA polymerase (RNAP). The polypeptide is DNA-directed RNA polymerase subunit epsilon (Streptococcus equi subsp. zooepidemicus (strain H70)).